The following is an 803-amino-acid chain: Volume-regulated anion channel subunit LRRC8C (803 aa).

Topologically, residues 1-22 are cytoplasmic; it reads MIPVTEFRQFSEQQPAFRVLKP. A helical membrane pass occupies residues 23–43; it reads WWDVFTDYLSVAMLMIGVFGC. Over 44–125 the chain is Extracellular; it reads TLQVMQDKII…YERALHWYAK (82 aa). Intrachain disulfides connect cysteine 54–cysteine 308 and cysteine 115–cysteine 293. N-linked (GlcNAc...) asparagine glycosylation is found at asparagine 64 and asparagine 70. A helical transmembrane segment spans residues 126–146; sequence YFPYLVLIHTLVFMLCSNFWF. Over 147–266 the chain is Cytoplasmic; that stretch reads KFPGSSSKIE…ILYAMYVRQT (120 aa). The segment at 177–209 is disordered; the sequence is EVSGEDSEEKDNRKNNMSRSNTTQSGPEGSLVN. Positions 191-209 are enriched in polar residues; the sequence is NNMSRSNTTQSGPEGSLVN. Phosphoserine is present on residues serine 212 and serine 215. Residues 267 to 287 form a helical membrane-spanning segment; sequence VLKVIKFLIIIAYNSALVSKV. At 288 to 320 the chain is on the extracellular side; it reads QFTVDCNVDIQDMTGYKNFSCNHTMAHLFSKLS. Residues 321 to 341 traverse the membrane as a helical segment; sequence FCYLCFVSIYGLTCLYTLYWL. The Cytoplasmic segment spans residues 342 to 803; sequence FYRSLKEYSF…SDVREQMKTE (462 aa). LRR repeat units follow at residues 397 to 419, 420 to 443, 446 to 465, 468 to 490, 492 to 513, 515 to 536, 543 to 563, 566 to 586, 590 to 611, 613 to 634, 638 to 659, 661 to 682, 684 to 705, 707 to 728, 730 to 751, 753 to 774, and 776 to 799; these read ENKLKQLNLNNEWTPDKLRQKLQ, TNAHNRLELPLIMLSGLPDTVFEI, LQSLKLEIIKNVMIPATIAQ, NLQELSLHQCSVKIHSAALSFLK, NLKVLSVKFDDMRELPPWMYGL, NLEELYLVGSLSHDISRNVTLE, SLKILSIKSNVSKIPQAVVDV, HLQKMCIHNDGTKLVMLNNLK, NLTELELVHCDLERIPHAVFSL, SLQELDLKENNLKSIEEIVSFQ, KLTVLKLWHNSITYIPEHIKKL, SLERLSFSHNKIEVLPSHLFLC, KIRYLDLSYNDIRFIPPEIGVL, SLQYFSITCNKVESLPDELYFC, KLKTLKIGKNSLSVLSPKIGNL, FLSYLDVKGNHFEILPPELGDC, and ALKRAGLVVEDALFETLPSDVREQ.

Belongs to the LRRC8 family. Heterohexamer; oligomerizes with other LRRC8 proteins (LRRC8A, LRRC8B, LRRC8D and/or LRRC8E) to form a heterohexamer. Homoheptamer; inactive, likely because it is not targeted to the plasma membrane in the absence of LRRC8A. In vivo, the subunit composition may depend primarily on expression levels, and heterooligomeric channels containing various proportions of the different LRRC8 proteins may coexist.

The protein resides in the cell membrane. It is found in the endoplasmic reticulum membrane. It catalyses the reaction chloride(in) = chloride(out). The catalysed reaction is iodide(out) = iodide(in). The enzyme catalyses taurine(out) = taurine(in). It carries out the reaction 2',3'-cGAMP(out) = 2',3'-cGAMP(in). Its function is as follows. Non-essential component of the volume-regulated anion channel (VRAC, also named VSOAC channel), an anion channel required to maintain a constant cell volume in response to extracellular or intracellular osmotic changes. The VRAC channel conducts iodide better than chloride and can also conduct organic osmolytes like taurine. Plays a redundant role in the efflux of amino acids, such as aspartate and glutamate, in response to osmotic stress. The VRAC channel also mediates transport of immunoreactive cyclic dinucleotide GMP-AMP (2'-3'-cGAMP), an immune messenger produced in response to DNA virus in the cytosol. Channel activity requires LRRC8A plus at least one other family member (LRRC8B, LRRC8C, LRRC8D or LRRC8E); channel characteristics depend on the precise subunit composition. The protein is Volume-regulated anion channel subunit LRRC8C of Bos taurus (Bovine).